A 312-amino-acid polypeptide reads, in one-letter code: Glyoxylate/hydroxypyruvate reductase A (312 aa).

R227 is an active-site residue. The active-site Proton donor is the H275.

This sequence belongs to the D-isomer specific 2-hydroxyacid dehydrogenase family. GhrA subfamily.

The protein localises to the cytoplasm. The catalysed reaction is glycolate + NADP(+) = glyoxylate + NADPH + H(+). The enzyme catalyses (R)-glycerate + NAD(+) = 3-hydroxypyruvate + NADH + H(+). It catalyses the reaction (R)-glycerate + NADP(+) = 3-hydroxypyruvate + NADPH + H(+). Functionally, catalyzes the NADPH-dependent reduction of glyoxylate and hydroxypyruvate into glycolate and glycerate, respectively. This is Glyoxylate/hydroxypyruvate reductase A from Citrobacter koseri (strain ATCC BAA-895 / CDC 4225-83 / SGSC4696).